The following is a 445-amino-acid chain: Arginine/agmatine antiporter (445 aa).

At 1–9 the chain is on the cytoplasmic side; it reads MSSDADAHK. A helical transmembrane segment spans residues 10–30; the sequence is VGLIPVTLMVSGNIMGSGVFL. Residue Ile23 participates in agmatine binding. Positions 23 and 26 each coordinate L-arginine. Over 31 to 38 the chain is Periplasmic; sequence LPANLAAT. A helical membrane pass occupies residues 39 to 59; that stretch reads GGIAIYGWLVTIIGALALSMV. Residues 60–98 are Cytoplasmic-facing; sequence YAKMSSLDPSPGGSYAYARRCFGPFLGYQTNVLYWLACW. 3 residues coordinate agmatine: Ala96, Cys97, and Asn101. Position 96 (Ala96) interacts with L-arginine. Residues 99–119 form a helical membrane-spanning segment; it reads IGNIAMVVIGVGYLSYFFPIL. The Periplasmic portion of the chain corresponds to 120–122; it reads KDP. The helical transmembrane segment at 123–143 threads the bilayer; it reads LVLTLTCVAVLWIFVLLNIVG. Topologically, residues 144–152 are cytoplasmic; the sequence is PKMITRVQA. A helical transmembrane segment spans residues 153 to 173; that stretch reads VATVLALVPIVGIAVFGWFWF. Residues 174–196 are Periplasmic-facing; the sequence is KGETYMAAWNVSGMNTFGAIQST. Residues 197–217 form a helical membrane-spanning segment; it reads LNVTLWSFIGVESASVAAGVV. The L-arginine site is built by Trp202 and Ile205. Ile205 contributes to the agmatine binding site. The Cytoplasmic segment spans residues 218–225; sequence KNPKRNVP. A helical transmembrane segment spans residues 226–246; it reads IATIGGVLIAAVCYVLSTTAI. Topologically, residues 247–275 are periplasmic; it reads MGMIPNAALRVSASPFGDAARMALGDTAG. Residues 276-296 form a helical membrane-spanning segment; it reads AIVSFCAAAGCLGSLGGWTLL. Position 293 (Trp293) interacts with agmatine. The Cytoplasmic segment spans residues 297 to 319; that stretch reads AGQTAKAAADDGLFPPIFARVNK. A helical transmembrane segment spans residues 320 to 340; sequence AGTPVAGLLIVGVLMTIFQFS. Over 341–355 the chain is Periplasmic; that stretch reads SMSPNAAKEFGLVSS. Residues 356 to 376 traverse the membrane as a helical segment; the sequence is VSVIFTLVPYLYTCAALLLLG. Residue Ser357 participates in L-arginine binding. The Cytoplasmic portion of the chain corresponds to 377–385; that stretch reads HGHFGKARP. The helical transmembrane segment at 386–406 threads the bilayer; it reads LYLLITFVAFVYCIWAVIGSG. Residues 407-408 lie on the Periplasmic side of the membrane; that stretch reads AK. Residues 409–429 form a helical membrane-spanning segment; that stretch reads EVMWSFVTLMVITALYALNYN. Residues 430–445 lie on the Cytoplasmic side of the membrane; it reads RIHKNPYPLDAPVKQD.

This sequence belongs to the amino acid-polyamine-organocation (APC) superfamily. Basic amino acid/polyamine antiporter (APA) (TC 2.A.3.2) family. In terms of assembly, homodimer; each subunit has its own individual transport capacity.

Its subcellular location is the cell inner membrane. It carries out the reaction agmatine(in) + L-arginine(out) = agmatine(out) + L-arginine(in). In terms of biological role, major component of the acid-resistance (AR) system allowing enteric pathogens to survive the acidic environment in the stomach. Exchanges extracellular arginine for its intracellular decarboxylation product agmatine (Agm) thereby expelling intracellular protons. Probably undergoes several conformational states in order to translocate the substrate across the membrane; keeps the substrate accessible to only 1 side of the membrane at a time by opening and closing 3 membrane-internal gates. The sequence is that of Arginine/agmatine antiporter (adiC) from Salmonella typhi.